We begin with the raw amino-acid sequence, 277 residues long: Digeranylgeranylglyceryl phosphate synthase (277 aa).

8 helical membrane passes run 16 to 36 (LLAG…LPEL), 40 to 60 (ILVF…NDYF), 83 to 105 (AALW…INIW), 107 to 124 (FLLA…AWKL), 146 to 166 (GAIA…AFLV), 202 to 222 (VGAL…KAGI), 224 to 244 (LGYL…FLIL), and 256 to 276 (QILL…ASLV).

This sequence belongs to the UbiA prenyltransferase family. DGGGP synthase subfamily. Mg(2+) is required as a cofactor.

The protein localises to the cell membrane. The enzyme catalyses sn-3-O-(geranylgeranyl)glycerol 1-phosphate + (2E,6E,10E)-geranylgeranyl diphosphate = 2,3-bis-O-(geranylgeranyl)-sn-glycerol 1-phosphate + diphosphate. Its pathway is membrane lipid metabolism; glycerophospholipid metabolism. Its function is as follows. Prenyltransferase that catalyzes the transfer of the geranylgeranyl moiety of geranylgeranyl diphosphate (GGPP) to the C2 hydroxyl of (S)-3-O-geranylgeranylglyceryl phosphate (GGGP). This reaction is the second ether-bond-formation step in the biosynthesis of archaeal membrane lipids. The protein is Digeranylgeranylglyceryl phosphate synthase of Thermococcus kodakarensis (strain ATCC BAA-918 / JCM 12380 / KOD1) (Pyrococcus kodakaraensis (strain KOD1)).